We begin with the raw amino-acid sequence, 861 residues long: DNA mismatch repair protein MutS (861 aa).

ATP is bound at residue 618 to 625; that stretch reads GPNMGGKS.

It belongs to the DNA mismatch repair MutS family.

Functionally, this protein is involved in the repair of mismatches in DNA. It is possible that it carries out the mismatch recognition step. This protein has a weak ATPase activity. The chain is DNA mismatch repair protein MutS from Shewanella sp. (strain MR-4).